Consider the following 480-residue polypeptide: Cytochrome P450 724B1 (480 aa).

A helical transmembrane segment spans residues Leu6–Phe26. Cys426 serves as a coordination point for heme.

The protein belongs to the cytochrome P450 family. Heme serves as cofactor. As to expression, ubiquitously expressed at low levels, but preferentially in the internodes and the florets before flowering.

The protein localises to the membrane. The enzyme catalyses campesterol + reduced [NADPH--hemoprotein reductase] + O2 = (22S)-22-hydroxycampesterol + oxidized [NADPH--hemoprotein reductase] + H2O + H(+). The protein operates within plant hormone biosynthesis; brassinosteroid biosynthesis. Its function is as follows. Involved in brassinosteroid biosynthesis. May catalyze a C6-oxidation step and may be involved to supply 6-deoxotyphasterol and typhasterol. Involved in internode elongation and seed development. Catalyzes the conversion of campesterol (CR) to (22S)-22-hydroxycampesterol (22-OHCR, 22-hydroxyCR). This Oryza sativa subsp. japonica (Rice) protein is Cytochrome P450 724B1.